Consider the following 304-residue polypeptide: Putative dihydroorotate dehydrogenase A (fumarate) (304 aa).

FMN contacts are provided by residues S22 and 46–47 (KG). Substrate-binding positions include K46 and 70-74 (NSVGL). FMN contacts are provided by N100 and N128. A substrate-binding site is contributed by N128. C131 functions as the Nucleophile in the catalytic mechanism. Residues K166 and V192 each contribute to the FMN site. Position 193 to 194 (193 to 194 (NT)) interacts with substrate. Residues G218, 244–245 (GG), and 266–267 (GT) contribute to the FMN site.

This sequence belongs to the dihydroorotate dehydrogenase family. Type 1 subfamily. Homodimer. Requires FMN as cofactor.

It localises to the cytoplasm. The catalysed reaction is (S)-dihydroorotate + fumarate = orotate + succinate. It functions in the pathway pyrimidine metabolism; UMP biosynthesis via de novo pathway. Catalyzes the conversion of dihydroorotate to orotate with fumarate as the electron acceptor. This is Putative dihydroorotate dehydrogenase A (fumarate) (pyrD) from Solibacter usitatus (strain Ellin6076).